The following is a 326-amino-acid chain: Nuclear egress protein 1 (326 aa).

The CCCH-type zinc finger occupies 115-244 (CLSLSGMGYY…YAVFPTKSVH (130 aa)).

Belongs to the herpesviridae NEC1 protein family. In terms of assembly, forms a heterohexameric complex with NEC2. Interacts with capsid vertex specific component 2/CVC2; this interaction directs the capsid to the host inner nuclear membrane to initiate budding. Phosphorylated at serine residues in the N-terminus. This phosphorylation regulates the localization within the inner nuclear membrane.

Its subcellular location is the host nucleus inner membrane. Plays an essential role in virion nuclear egress, the first step of virion release from infected cell. Within the host nucleus, NEC1 interacts with the newly formed capsid through the vertexes and directs it to the inner nuclear membrane by associating with NEC2. Induces the budding of the capsid at the inner nuclear membrane as well as its envelopment into the perinuclear space. There, the NEC1/NEC2 complex promotes the fusion of the enveloped capsid with the outer nuclear membrane and the subsequent release of the viral capsid into the cytoplasm where it will reach the secondary budding sites in the host Golgi or trans-Golgi network. This Equine herpesvirus 1 (strain Ab4p) (EHV-1) protein is Nuclear egress protein 1.